Consider the following 174-residue polypeptide: Co-chaperone protein HscB homolog (174 aa).

In terms of domain architecture, J spans 2-74 (NYFELFSFTP…ILRAEHMLSL (73 aa)).

The protein belongs to the HscB family. As to quaternary structure, interacts with HscA and stimulates its ATPase activity.

Its function is as follows. Co-chaperone involved in the maturation of iron-sulfur cluster-containing proteins. Seems to help targeting proteins to be folded toward HscA. The chain is Co-chaperone protein HscB homolog from Shewanella woodyi (strain ATCC 51908 / MS32).